A 477-amino-acid polypeptide reads, in one-letter code: Aspartyl/glutamyl-tRNA(Asn/Gln) amidotransferase subunit B (477 aa).

The protein belongs to the GatB/GatE family. GatB subfamily. Heterotrimer of A, B and C subunits.

The catalysed reaction is L-glutamyl-tRNA(Gln) + L-glutamine + ATP + H2O = L-glutaminyl-tRNA(Gln) + L-glutamate + ADP + phosphate + H(+). It carries out the reaction L-aspartyl-tRNA(Asn) + L-glutamine + ATP + H2O = L-asparaginyl-tRNA(Asn) + L-glutamate + ADP + phosphate + 2 H(+). Functionally, allows the formation of correctly charged Asn-tRNA(Asn) or Gln-tRNA(Gln) through the transamidation of misacylated Asp-tRNA(Asn) or Glu-tRNA(Gln) in organisms which lack either or both of asparaginyl-tRNA or glutaminyl-tRNA synthetases. The reaction takes place in the presence of glutamine and ATP through an activated phospho-Asp-tRNA(Asn) or phospho-Glu-tRNA(Gln). The polypeptide is Aspartyl/glutamyl-tRNA(Asn/Gln) amidotransferase subunit B (Streptococcus sanguinis (strain SK36)).